Reading from the N-terminus, the 310-residue chain is Hydroxyacylglutathione hydrolase, mitochondrial (310 aa).

Positions 104, 106, 108, 109, 160, and 184 each coordinate Zn(2+). Substrate is bound by residues 193-195, 223-225, and 299-302; these read KFF, HEY, and RKEK. A Zn(2+)-binding site is contributed by His-223.

Belongs to the metallo-beta-lactamase superfamily. Glyoxalase II family. In terms of assembly, monomer. Requires Zn(2+) as cofactor.

It is found in the mitochondrion matrix. The protein localises to the cytoplasm. It catalyses the reaction an S-(2-hydroxyacyl)glutathione + H2O = a 2-hydroxy carboxylate + glutathione + H(+). The catalysed reaction is (R)-S-lactoylglutathione + H2O = (R)-lactate + glutathione + H(+). In terms of biological role, thiolesterase that catalyzes the hydrolysis of S-D-lactoyl-glutathione to form glutathione and D-lactic acid. The protein is Hydroxyacylglutathione hydrolase, mitochondrial (HAGH) of Gallus gallus (Chicken).